A 288-amino-acid polypeptide reads, in one-letter code: 3-methyl-2-oxobutanoate hydroxymethyltransferase (288 aa).

Asp48 and Asp87 together coordinate Mg(2+). Residues 48-49, Asp87, and Lys116 each bind 3-methyl-2-oxobutanoate; that span reads DS. Glu118 provides a ligand contact to Mg(2+). Residue Glu185 is the Proton acceptor of the active site.

It belongs to the PanB family. In terms of assembly, homodecamer; pentamer of dimers. Mg(2+) is required as a cofactor.

It localises to the cytoplasm. It carries out the reaction 3-methyl-2-oxobutanoate + (6R)-5,10-methylene-5,6,7,8-tetrahydrofolate + H2O = 2-dehydropantoate + (6S)-5,6,7,8-tetrahydrofolate. The protein operates within cofactor biosynthesis; coenzyme A biosynthesis. Its function is as follows. Catalyzes the reversible reaction in which hydroxymethyl group from 5,10-methylenetetrahydrofolate is transferred onto alpha-ketoisovalerate to form ketopantoate. The chain is 3-methyl-2-oxobutanoate hydroxymethyltransferase from Hyperthermus butylicus (strain DSM 5456 / JCM 9403 / PLM1-5).